The primary structure comprises 367 residues: Pentatricopeptide repeat-containing protein At1g11900 (367 aa).

PPR repeat units follow at residues 69-103 (SKIDYTNLVEKFTRDGNLSGAYDLLQSLQEKNICL), 104-139 (PISVFKNLLAAAGELNDMKLSCRVFREVLILPGKEP), 141-175 (SSDCYLNLARAFINTDDCTYLTSLLKEISESSLPY), 176-210 (RLIVMNRIIFAFAETRQIDKVLMILKEMKEWECKP), 211-241 (DVITYNSVLDILGRAGLVNEILGVLSTMKED), 247-281 (NIITYNTVLNGMRKACRFDMCLVIYNEMVQCGIEP), 282-316 (DLLSYTAVIDSLGRSGNVKESLRLFDEMKQRQIRP), and 317-347 (SVYVYRALIDCLKKSGDFQSALQLSDELKNT).

Belongs to the PPR family. P subfamily.

The chain is Pentatricopeptide repeat-containing protein At1g11900 from Arabidopsis thaliana (Mouse-ear cress).